A 221-amino-acid chain; its full sequence is GTP-binding nuclear protein Ran-B1 (221 aa).

Residues 10 to 174 (DYPSFKLVIV…LYLARKLAGD (165 aa)) form the Small GTPase Ran-type domain. 21 to 28 (DGGTGKTT) provides a ligand contact to GTP. Residues 40–48 (KKYEPTIGV) form a switch-I region. GTP contacts are provided by residues glycine 71, 125 to 128 (NKVD), and 153 to 155 (SAK). Residues 71 to 87 (GQEKFGGLRDGYYIHGQ) form a switch-II region.

The protein belongs to the small GTPase superfamily. Ran family. Found in a nuclear export complex with RanGTP, exportin and pre-miRNA.

The protein resides in the nucleus. Its function is as follows. GTP-binding protein involved in nucleocytoplasmic transport. Required for the import of protein into the nucleus and also for RNA export. Involved in chromatin condensation and control of cell cycle. In Nicotiana tabacum (Common tobacco), this protein is GTP-binding nuclear protein Ran-B1 (RAN-B1).